Here is a 306-residue protein sequence, read N- to C-terminus: Acetaldehyde dehydrogenase (306 aa).

Position 12 to 15 (12 to 15) interacts with NAD(+); the sequence is SGNI. Cysteine 127 acts as the Acyl-thioester intermediate in catalysis. NAD(+)-binding positions include 158–166 and asparagine 277; that span reads SAGPGTRAN.

Belongs to the acetaldehyde dehydrogenase family.

The enzyme catalyses acetaldehyde + NAD(+) + CoA = acetyl-CoA + NADH + H(+). The chain is Acetaldehyde dehydrogenase from Mycolicibacterium gilvum (strain PYR-GCK) (Mycobacterium gilvum (strain PYR-GCK)).